Reading from the N-terminus, the 847-residue chain is E4 SUMO-protein ligase PIAL1 (847 aa).

Positions 113–271 are interacting domain (IND), required for interaction with MOM1 and PIAL2; it reads VNSPVTLISQ…EVVGSNSDCD (159 aa). The SP-RING-type zinc-finger motif lies at 268 to 349; sequence SDCDIIEGPS…LRKILEEVGR (82 aa). Zn(2+) contacts are provided by Cys299, His301, Cys322, and Cys325. 7 consecutive repeat copies span residues 569–591, 592–614, 615–637, 638–659, 660–682, 683–705, and 706–728. Residues 569-728 are 7 X 23 AA approximate tandem repeats; sequence QRPVPSYIAH…LPVSYGGTTD (160 aa).

The protein belongs to the PIAL protein ligase family. Homodimer. Interacts with MOM1 and PIAL2 to form a high molecular mass complex which mediates transcriptional gene silencing at heterochromatin regions. Expressed in leaves, stems and flowers, and, at low levels, in siliques and old leaves.

It is found in the nucleus. The protein operates within protein modification; protein sumoylation. In terms of biological role, together with MOM1 and PIAL2, regulates transcriptional gene silencing (TGS) independently of changes in DNA methylation. E4-type SUMO ligase that promotes SUMO chain formation in a SCE1-dependent manner and thus contributes to a pathway for proteolytic removal of sumoylation substrates. Involved in stress responses (e.g. osmotic, salt and abscisic acid ABA) and sulfur metabolism. The chain is E4 SUMO-protein ligase PIAL1 from Arabidopsis thaliana (Mouse-ear cress).